We begin with the raw amino-acid sequence, 348 residues long: Dihydroorotase (348 aa).

Zn(2+) is bound by residues His14 and His16. Residues 16-18 (HLR) and Asn42 each bind substrate. The Zn(2+) site is built by Lys100, His137, and His175. Lys100 carries the N6-carboxylysine modification. His137 contacts substrate. Leu220 contacts substrate. Asp248 contributes to the Zn(2+) binding site. Asp248 is an active-site residue. The substrate site is built by His252 and Ala264.

This sequence belongs to the metallo-dependent hydrolases superfamily. DHOase family. Class II DHOase subfamily. Homodimer. It depends on Zn(2+) as a cofactor.

It catalyses the reaction (S)-dihydroorotate + H2O = N-carbamoyl-L-aspartate + H(+). Its pathway is pyrimidine metabolism; UMP biosynthesis via de novo pathway; (S)-dihydroorotate from bicarbonate: step 3/3. In terms of biological role, catalyzes the reversible cyclization of carbamoyl aspartate to dihydroorotate. This is Dihydroorotase from Pseudomonas paraeruginosa (strain DSM 24068 / PA7) (Pseudomonas aeruginosa (strain PA7)).